We begin with the raw amino-acid sequence, 402 residues long: MNFPSIQEQLDLITRNTVEIISVDELEQKLVSSQKSGKPLNIKLGADPSRPDLHLGHSVVLRKLRDFQDLGHHAILIIGNFTAMIGDPSGKSKTRPQLSAEEAAENGRSYFEQAIKILDAANTTLCSNADWLGAMTFADVIRLSSHYTVARMLERNDFEQRYRAQEPISIHEFLYPLAQGMDSVHLKNDVELGGTDQKFNLLVGRDLQREYGIAPQVCITMPLLVGTDGKDKMSKSLDNAISFTDTPNDMYGRALSIPDTLIETYSRLLLSQFGAALNEILSQIETNPRLAKRAMARHIVADYYSPEAASAAEEHFDKLFVHKQAPDNLELLELEATSMPIIDLLTLLGAAPSKSEARRMIQAKSVSIDDEKIEDFNAVIALEGEAKIVRAGKRKFFKIRSK.

Residues 48 to 57 (PSRPDLHLGH) carry the 'HIGH' region motif. A 'KMSKS' region motif is present at residues 232-236 (KMSKS). Lysine 235 contacts ATP. An S4 RNA-binding domain is found at 339 to 402 (MPIIDLLTLL…KRKFFKIRSK (64 aa)).

This sequence belongs to the class-I aminoacyl-tRNA synthetase family. TyrS type 2 subfamily. As to quaternary structure, homodimer.

Its subcellular location is the cytoplasm. The catalysed reaction is tRNA(Tyr) + L-tyrosine + ATP = L-tyrosyl-tRNA(Tyr) + AMP + diphosphate + H(+). In terms of biological role, catalyzes the attachment of tyrosine to tRNA(Tyr) in a two-step reaction: tyrosine is first activated by ATP to form Tyr-AMP and then transferred to the acceptor end of tRNA(Tyr). The protein is Tyrosine--tRNA ligase of Chlorobium chlorochromatii (strain CaD3).